An 807-amino-acid chain; its full sequence is Dual specificity protein phosphatase PPS1 (807 aa).

The Tyrosine-protein phosphatase domain occupies 585–783 (LPSRILRHLY…LFKWWKKHYN (199 aa)). A catalytic region spans residues 593 to 807 (LYLGSLDHAQ…GIAEVNMKYT (215 aa)). Catalysis depends on Cys725, which acts as the Phosphocysteine intermediate.

It belongs to the protein-tyrosine phosphatase family. Non-receptor class dual specificity subfamily.

It carries out the reaction O-phospho-L-tyrosyl-[protein] + H2O = L-tyrosyl-[protein] + phosphate. It catalyses the reaction O-phospho-L-seryl-[protein] + H2O = L-seryl-[protein] + phosphate. The enzyme catalyses O-phospho-L-threonyl-[protein] + H2O = L-threonyl-[protein] + phosphate. Its function is as follows. Protein phosphatase with specificity for serine, threonine, and tyrosine residues; has a role in the DNA synthesis phase of the cell cycle. The polypeptide is Dual specificity protein phosphatase PPS1 (PPS1) (Saccharomyces cerevisiae (strain ATCC 204508 / S288c) (Baker's yeast)).